The chain runs to 233 residues: Purine nucleoside phosphorylase DeoD-type (233 aa).

An a purine D-ribonucleoside-binding site is contributed by H4. Residues G20, R24, R43, and 87-90 (RIGT) each bind phosphate. A purine D-ribonucleoside is bound by residues 179–181 (EME) and 203–204 (SD). Residue D204 is the Proton donor of the active site.

It belongs to the PNP/UDP phosphorylase family. In terms of assembly, homohexamer; trimer of homodimers.

It carries out the reaction a purine D-ribonucleoside + phosphate = a purine nucleobase + alpha-D-ribose 1-phosphate. It catalyses the reaction a purine 2'-deoxy-D-ribonucleoside + phosphate = a purine nucleobase + 2-deoxy-alpha-D-ribose 1-phosphate. Functionally, catalyzes the reversible phosphorolytic breakdown of the N-glycosidic bond in the beta-(deoxy)ribonucleoside molecules, with the formation of the corresponding free purine bases and pentose-1-phosphate. In Thermoanaerobacter pseudethanolicus (strain ATCC 33223 / 39E) (Clostridium thermohydrosulfuricum), this protein is Purine nucleoside phosphorylase DeoD-type.